The primary structure comprises 112 residues: UPF0060 membrane protein XOO1694 (112 aa).

4 consecutive transmembrane segments (helical) span residues 8 to 28, 32 to 52, 62 to 82, and 92 to 112; these read LLLF…PYLW, GGSV…VWLL, VYAA…LWWV, and LLGA…PRSA.

This sequence belongs to the UPF0060 family.

It localises to the cell inner membrane. This Xanthomonas oryzae pv. oryzae (strain MAFF 311018) protein is UPF0060 membrane protein XOO1694.